Consider the following 452-residue polypeptide: Bifunctional protein GlmU (452 aa).

The pyrophosphorylase stretch occupies residues Met1–Arg218. Residues Leu6–Gly9, Lys20, Gln68, Gly73–Thr74, Tyr95–Asp97, Gly134, Glu147, Asn162, and Asn216 each bind UDP-N-acetyl-alpha-D-glucosamine. Asp97 lines the Mg(2+) pocket. Asn216 serves as a coordination point for Mg(2+). The linker stretch occupies residues Ile219–Ser239. Residues Gly240–Glu452 are N-acetyltransferase. Arg321 and Lys339 together coordinate UDP-N-acetyl-alpha-D-glucosamine. His351 serves as the catalytic Proton acceptor. 2 residues coordinate UDP-N-acetyl-alpha-D-glucosamine: Tyr354 and Asn365. Acetyl-CoA is bound by residues Ala368, Asn374–Tyr375, Ser393, Ala411, and Arg428.

The protein in the N-terminal section; belongs to the N-acetylglucosamine-1-phosphate uridyltransferase family. This sequence in the C-terminal section; belongs to the transferase hexapeptide repeat family. As to quaternary structure, homotrimer. The cofactor is Mg(2+).

It localises to the cytoplasm. It carries out the reaction alpha-D-glucosamine 1-phosphate + acetyl-CoA = N-acetyl-alpha-D-glucosamine 1-phosphate + CoA + H(+). The catalysed reaction is N-acetyl-alpha-D-glucosamine 1-phosphate + UTP + H(+) = UDP-N-acetyl-alpha-D-glucosamine + diphosphate. The protein operates within nucleotide-sugar biosynthesis; UDP-N-acetyl-alpha-D-glucosamine biosynthesis; N-acetyl-alpha-D-glucosamine 1-phosphate from alpha-D-glucosamine 6-phosphate (route II): step 2/2. Its pathway is nucleotide-sugar biosynthesis; UDP-N-acetyl-alpha-D-glucosamine biosynthesis; UDP-N-acetyl-alpha-D-glucosamine from N-acetyl-alpha-D-glucosamine 1-phosphate: step 1/1. It participates in bacterial outer membrane biogenesis; LPS lipid A biosynthesis. Functionally, catalyzes the last two sequential reactions in the de novo biosynthetic pathway for UDP-N-acetylglucosamine (UDP-GlcNAc). The C-terminal domain catalyzes the transfer of acetyl group from acetyl coenzyme A to glucosamine-1-phosphate (GlcN-1-P) to produce N-acetylglucosamine-1-phosphate (GlcNAc-1-P), which is converted into UDP-GlcNAc by the transfer of uridine 5-monophosphate (from uridine 5-triphosphate), a reaction catalyzed by the N-terminal domain. This is Bifunctional protein GlmU from Fervidobacterium nodosum (strain ATCC 35602 / DSM 5306 / Rt17-B1).